We begin with the raw amino-acid sequence, 301 residues long: Probable alpha-L-glutamate ligase 1 (301 aa).

The region spanning 104–287 (LQLLSRKGIG…VTEPIVEYIE (184 aa)) is the ATP-grasp domain. Residues K141, 178 to 179 (EY), D187, and 211 to 213 (RSN) contribute to the ATP site. 3 residues coordinate Mg(2+): D248, E260, and N262. 3 residues coordinate Mn(2+): D248, E260, and N262.

The protein belongs to the RimK family. The cofactor is Mg(2+). It depends on Mn(2+) as a cofactor.

The polypeptide is Probable alpha-L-glutamate ligase 1 (Shewanella sp. (strain ANA-3)).